The sequence spans 83 residues: Sulfur carrier protein TusA (83 aa).

Catalysis depends on Cys-19, which acts as the Cysteine persulfide intermediate.

It belongs to the sulfur carrier protein TusA family.

It is found in the cytoplasm. Functionally, sulfur carrier protein which probably makes part of a sulfur-relay system. This is Sulfur carrier protein TusA from Aliivibrio fischeri (strain ATCC 700601 / ES114) (Vibrio fischeri).